The following is a 184-amino-acid chain: Protein PLANT CADMIUM RESISTANCE 4 (184 aa).

Residues 1–10 (MGRPGSQPNE) show a composition bias toward polar residues. The interval 1-21 (MGRPGSQPNEAQPPPVQVQPT) is disordered. Residues 96-116 (GGLLYGMIFFIGVPFVYSCMF) form a helical membrane-spanning segment.

This sequence belongs to the cornifelin family.

It localises to the membrane. Its function is as follows. May be involved in heavy metals transport. The protein is Protein PLANT CADMIUM RESISTANCE 4 (PCR4) of Arabidopsis thaliana (Mouse-ear cress).